A 582-amino-acid chain; its full sequence is Phosphoribosylaminoimidazole carboxylase (582 aa).

The 192-residue stretch at 114-305 (KKYLAERGVA…QFENHLRAIL (192 aa)) folds into the ATP-grasp domain. 143-200 (AGRLGLPLMLKAKTLAYDGRGNSPLKSASSEDIQASLKFLGDRPLYAEGWAPFVKEVA) contacts ATP.

This sequence in the C-terminal section; belongs to the AIR carboxylase family. Class I subfamily.

It carries out the reaction 5-amino-1-(5-phospho-D-ribosyl)imidazole-4-carboxylate + H(+) = 5-amino-1-(5-phospho-beta-D-ribosyl)imidazole + CO2. Its pathway is purine metabolism; IMP biosynthesis via de novo pathway; 5-amino-1-(5-phospho-D-ribosyl)imidazole-4-carboxylate from 5-amino-1-(5-phospho-D-ribosyl)imidazole (carboxylase route): step 1/1. This chain is Phosphoribosylaminoimidazole carboxylase (ADE2), found in Cryptococcus neoformans var. neoformans serotype D (strain B-3501A) (Filobasidiella neoformans).